The sequence spans 304 residues: Acetyl-coenzyme A carboxylase carboxyl transferase subunit beta (304 aa).

The CoA carboxyltransferase N-terminal domain occupies 52–304 (EVTKCPSCGV…TIFKVLNDII (253 aa)). Zn(2+)-binding residues include cysteine 56, cysteine 59, cysteine 75, and cysteine 78. A C4-type zinc finger spans residues 56 to 78 (CPSCGVLSHKSEIRANMKMCSNC).

It belongs to the AccD/PCCB family. Acetyl-CoA carboxylase is a heterohexamer composed of biotin carboxyl carrier protein (AccB), biotin carboxylase (AccC) and two subunits each of ACCase subunit alpha (AccA) and ACCase subunit beta (AccD). Zn(2+) is required as a cofactor.

The protein localises to the cytoplasm. The enzyme catalyses N(6)-carboxybiotinyl-L-lysyl-[protein] + acetyl-CoA = N(6)-biotinyl-L-lysyl-[protein] + malonyl-CoA. It participates in lipid metabolism; malonyl-CoA biosynthesis; malonyl-CoA from acetyl-CoA: step 1/1. Component of the acetyl coenzyme A carboxylase (ACC) complex. Biotin carboxylase (BC) catalyzes the carboxylation of biotin on its carrier protein (BCCP) and then the CO(2) group is transferred by the transcarboxylase to acetyl-CoA to form malonyl-CoA. The sequence is that of Acetyl-coenzyme A carboxylase carboxyl transferase subunit beta from Fusobacterium nucleatum subsp. nucleatum (strain ATCC 25586 / DSM 15643 / BCRC 10681 / CIP 101130 / JCM 8532 / KCTC 2640 / LMG 13131 / VPI 4355).